The primary structure comprises 227 residues: NADH-quinone oxidoreductase subunit C (227 aa).

This sequence belongs to the complex I 30 kDa subunit family. As to quaternary structure, NDH-1 is composed of 14 different subunits. Subunits NuoB, C, D, E, F, and G constitute the peripheral sector of the complex.

It localises to the cell inner membrane. It catalyses the reaction a quinone + NADH + 5 H(+)(in) = a quinol + NAD(+) + 4 H(+)(out). Its function is as follows. NDH-1 shuttles electrons from NADH, via FMN and iron-sulfur (Fe-S) centers, to quinones in the respiratory chain. The immediate electron acceptor for the enzyme in this species is believed to be ubiquinone. Couples the redox reaction to proton translocation (for every two electrons transferred, four hydrogen ions are translocated across the cytoplasmic membrane), and thus conserves the redox energy in a proton gradient. The polypeptide is NADH-quinone oxidoreductase subunit C (Coxiella burnetii (strain RSA 331 / Henzerling II)).